A 658-amino-acid chain; its full sequence is Threonine--tRNA ligase (658 aa).

Positions 1–64 (MSNTVSLQFP…GASGKVEIIT (64 aa)) constitute a TGS domain. The tract at residues 246–548 (DHRRLGREMD…LIENFAGHMP (303 aa)) is catalytic. Positions 343, 394, and 525 each coordinate Zn(2+).

The protein belongs to the class-II aminoacyl-tRNA synthetase family. In terms of assembly, homodimer. Zn(2+) serves as cofactor.

The protein localises to the cytoplasm. The catalysed reaction is tRNA(Thr) + L-threonine + ATP = L-threonyl-tRNA(Thr) + AMP + diphosphate + H(+). In terms of biological role, catalyzes the attachment of threonine to tRNA(Thr) in a two-step reaction: L-threonine is first activated by ATP to form Thr-AMP and then transferred to the acceptor end of tRNA(Thr). Also edits incorrectly charged L-seryl-tRNA(Thr). The sequence is that of Threonine--tRNA ligase from Brucella melitensis biotype 1 (strain ATCC 23456 / CCUG 17765 / NCTC 10094 / 16M).